Consider the following 658-residue polypeptide: Exoribonuclease 2 (658 aa).

In terms of domain architecture, RNB spans 189 to 530; sequence REDLTSLYFT…VNHRLIKQVL (342 aa). In terms of domain architecture, S1 motif spans 576–658; the sequence is AVEFDCEIAD…ETRSIVGNII (83 aa).

Belongs to the RNR ribonuclease family. RNase II subfamily.

It localises to the cytoplasm. It catalyses the reaction Exonucleolytic cleavage in the 3'- to 5'-direction to yield nucleoside 5'-phosphates.. Involved in mRNA degradation. Hydrolyzes single-stranded polyribonucleotides processively in the 3' to 5' direction. The sequence is that of Exoribonuclease 2 from Actinobacillus pleuropneumoniae serotype 7 (strain AP76).